Here is a 479-residue protein sequence, read N- to C-terminus: MATVSELCCAALNTSIGNRIAFPGSTAYNESLSSYFGVNAQLPPSCFVLPLSAQDVSVAVQTLTSQPDPCFFAIRSGGHTTSLGASAIEAGVTMDLSGMNTTTYDSSTNTAFIQPGARWGSVYETLLRDNVLVPGGRTASVGVGGYLTGGRNSFHAARVGLACLSIKGYEIVLADGEVAKVDQDSHPNLFRALKGGSNNFGIVTLFDMEAFSTEGTIWGGTVLYDISTKDQYIAAGTAFTDNIPNDPYASWVGMFAYNSTTDQTAIFTSLAYTRPVQSWPQAFSEFYAIPNITHTLRSATVLDLAVENSFPYGYRNVLQTGTYSNNAEIIQKAVIILNNQVKMAKLRARGKDYALFAIVQPWVPLFWEHSEARGGDVLGLERFETNLLNIAWDYSWDNSADDELLYELAQSAREQLDEYARSTGAYNEYIYLNYAGRTQDPLRGYGLENLEFLRRVSEKFDPDGVFQRLVRGGFKIDRA.

The region spanning 40-213 (AQLPPSCFVL…TLFDMEAFST (174 aa)) is the FAD-binding PCMH-type domain. A Pros-8alpha-FAD histidine modification is found at His79.

This sequence belongs to the oxygen-dependent FAD-linked oxidoreductase family. FAD is required as a cofactor.

It participates in secondary metabolite biosynthesis. In terms of biological role, FAD-dependent monooxygenase; part of the gene cluster that mediates the biosynthesis of the polyenes aspernidgulenes. The carbon backbone of aspernidgulenes is synthesized by the HR-PKS sdgA, which accepts acetyl-CoA as the starter unit and performs malonyl-CoA extensions as well as regioselective methylation and reduction. The resulting nonaketide offloads the HR-PKS by intramolecular lactonization to yield the 5,6-dihydro-alpha-pyrone-containing hexaenoic acids preaspernidgulene A1 and A2. The FAD-dependent monooxygenase sdgC then installs the first epoxide on the penultimate double bond. Subsequently, the FAD-dependent monooxygenase sdgF presumably generates a ketone intermediate through Meinwald rearrangement involving a hydride shift. Next, sdgC introduces another epoxide on the last olefin of the ketone intermediate after E/Z isomerization. The epoxide hydrolase sdgD then catalyzes stereospecific cyclization of the 5,6-dihydro-alpha-pyrone and opening of the epoxide ring to form an oxygenated trimethylcyclopentanone and an oxabicyclo[2.2.1]heptane unit. Finally, the bicyclic unit undergoes hydrolytic cleavage, either spontaneously or catalyzed by sdgD, to assemble the dimethyl-gamma-lactone moiety in aspernidgulene A1. This Emericella nidulans (strain FGSC A4 / ATCC 38163 / CBS 112.46 / NRRL 194 / M139) (Aspergillus nidulans) protein is FAD-dependent monooxygenase sdcF.